Reading from the N-terminus, the 165-residue chain is Protein C2-DOMAIN ABA-RELATED 7 (165 aa).

Methionine 1 bears the N-acetylmethionine mark. Residues 1–106 (MEELVGLLRI…HKMGLQELPD (106 aa)) enclose the C2 domain. 7 residues coordinate Ca(2+): arginine 21, aspartate 22, aspartate 27, aspartate 73, lysine 74, aspartate 75, and aspartate 81.

It belongs to the plant CAR protein family. In terms of assembly, binds to PYR/PYL/RCAR abscisic acid intracellular receptors in an ABA-independent manner, both at the plasma membrane and in the nucleus.

It localises to the cell membrane. The protein localises to the nucleus. Functionally, stimulates the GTPase/ATPase activities of Obg-like ATPases. Mediates the transient calcium-dependent interaction of PYR/PYL/RCAR abscisic acid (ABA) receptors with the plasma membrane and thus regulates ABA sensitivity. This Arabidopsis thaliana (Mouse-ear cress) protein is Protein C2-DOMAIN ABA-RELATED 7.